The chain runs to 220 residues: Protein ABA DEFICIENT 4, chloroplastic (220 aa).

Residues 1 to 37 constitute a chloroplast transit peptide; sequence MGFSSFISQPLSSSLSVMKRNVSAKRSELCLDSSKIR. Helical transmembrane passes span 77 to 97, 112 to 132, 154 to 174, and 195 to 215; these read IASSVFAVGTTAVLPFYTLMV, SVPYIILGVLYVYLLYISWTP, MFSSEMTLASAWIHLLVVDLF, and SLCLLFCPVGIVSHFVTKAII.

Expressed in root vasculature, root hairs, leaves, trichomes, sepals, stamens, stigma, pedicels, siliques and embryo.

It is found in the plastid. The protein resides in the chloroplast membrane. Required for neoxanthin biosynthesis, an intermediary step in abscisic acid (ABA) biosynthesis. Probably not involved directly in the enzymatic conversion of violaxanthin to neoxanthin. Cannot convert violaxanthin to neoxanthin in vitro. Required for ABA biosynthesis in response to drought stress. Required for neoxanthin biosynthesis which is involved in photoprotection of photosystem II (PSII). Neoxanthin acts as an antioxidant within the photosystem PSII supercomplex. In Arabidopsis thaliana (Mouse-ear cress), this protein is Protein ABA DEFICIENT 4, chloroplastic.